The following is a 193-amino-acid chain: Ion-translocating oxidoreductase complex subunit B (193 aa).

The interval 1 to 26 (MSTMLIAVILLTLLALFFGVLLGFAA) is hydrophobic. A 4Fe-4S domain is found at 32-90 (EGNPIVDELEAILPQTQCGQCGYPGCRPYAEAIANGDKVNKCPPGGTATMEKLANLMGV). [4Fe-4S] cluster contacts are provided by Cys-49, Cys-52, Cys-57, Cys-73, Cys-114, Cys-117, Cys-120, Cys-124, Cys-144, Cys-147, Cys-150, and Cys-154. 4Fe-4S ferredoxin-type domains follow at residues 105-134 (KVAYIREDECIGCTKCIQACPVDAIIGAGK) and 136-164 (MHTVLTADCTGCDLCVEPCPVDCIDMIPV).

It belongs to the 4Fe4S bacterial-type ferredoxin family. RnfB subfamily. The complex is composed of six subunits: RnfA, RnfB, RnfC, RnfD, RnfE and RnfG. The cofactor is [4Fe-4S] cluster.

It is found in the cell inner membrane. Its function is as follows. Part of a membrane-bound complex that couples electron transfer with translocation of ions across the membrane. This chain is Ion-translocating oxidoreductase complex subunit B, found in Shewanella sp. (strain ANA-3).